A 219-amino-acid polypeptide reads, in one-letter code: Cyclin-U4-3 (219 aa).

The protein belongs to the cyclin family. Cyclin U/P subfamily. Interacts with CDKA-1. As to expression, expressed at low levels in roots, stems and flowers. Expressed in the shoot apex, leaf primordia and young leaves.

This is Cyclin-U4-3 (CYCU4-3) from Arabidopsis thaliana (Mouse-ear cress).